A 107-amino-acid chain; its full sequence is Small ribosomal subunit protein eS25 (107 aa).

A disordered region spans residues 1 to 35 (MPPKQQLSKAAKAAAAMAGGKKSKKKWSKKSHKDK). Residues 8 to 20 (SKAAKAAAAMAGG) show a composition bias toward low complexity. Residues 21-35 (KKSKKKWSKKSHKDK) show a composition bias toward basic residues.

This sequence belongs to the eukaryotic ribosomal protein eS25 family.

In Candida glabrata (strain ATCC 2001 / BCRC 20586 / JCM 3761 / NBRC 0622 / NRRL Y-65 / CBS 138) (Yeast), this protein is Small ribosomal subunit protein eS25 (RPS25).